Reading from the N-terminus, the 331-residue chain is Putative ankyrin repeat protein FPV012 (331 aa).

ANK repeat units follow at residues 11–40 (DGYT…NPNT), 44–73 (DSYT…NVDK), 77–106 (DGYT…NPNY), and 110–139 (YGIT…NCNQ).

The polypeptide is Putative ankyrin repeat protein FPV012 (Vertebrata (FPV)).